We begin with the raw amino-acid sequence, 206 residues long: MSSSLSQTSKYQATSVVNGLLSNLLPGVPKIRANNGKTSVNNGSKAQLIDRNLKKRVQLQNRDVHKIKKKCKLVKKKKVKKHKLDKEQLEQLAKHQVLKKHQQEGTLTDHERKYLNKLIKRNSQNLRSWDLEEEVRDELEDIQQSILKDTVSTANTDRSKRRRFKRKQFKEDIKGSDFVKDHRYPGLTPGLAPVGLSDEEDSSEED.

Residues 178 to 206 form a disordered region; it reads FVKDHRYPGLTPGLAPVGLSDEEDSSEED. 3 positions are modified to phosphoserine: serine 197, serine 202, and serine 203. The segment covering 197 to 206 has biased composition (acidic residues); that stretch reads SDEEDSSEED.

It belongs to the RRT14 family.

The protein resides in the nucleus. Its subcellular location is the nucleolus. Its function is as follows. Involved in ribosome biogenesis, probably through modulation of rDNA transcription. The chain is Regulator of rDNA transcription 14 (RRT14) from Saccharomyces cerevisiae (strain AWRI1631) (Baker's yeast).